Consider the following 277-residue polypeptide: Putative phosphoenolpyruvate synthase regulatory protein (277 aa).

157–164 provides a ligand contact to ADP; sequence GVSRCGKT.

The protein belongs to the pyruvate, phosphate/water dikinase regulatory protein family. PSRP subfamily.

The catalysed reaction is [pyruvate, water dikinase] + ADP = [pyruvate, water dikinase]-phosphate + AMP + H(+). It catalyses the reaction [pyruvate, water dikinase]-phosphate + phosphate + H(+) = [pyruvate, water dikinase] + diphosphate. Functionally, bifunctional serine/threonine kinase and phosphorylase involved in the regulation of the phosphoenolpyruvate synthase (PEPS) by catalyzing its phosphorylation/dephosphorylation. This Klebsiella pneumoniae (strain 342) protein is Putative phosphoenolpyruvate synthase regulatory protein.